A 601-amino-acid chain; its full sequence is DNA topoisomerase I, mitochondrial (601 aa).

The N-terminal 50 residues, 1–50 (MRVVRLLRLRAALTLLGEVPRRPASRGVPGSRRTQKGSGARWEKEKHEDG), are a transit peptide targeting the mitochondrion. Positions 22-48 (RPASRGVPGSRRTQKGSGARWEKEKHE) are disordered. Interaction with DNA regions lie at residues 261 to 262 (KY), 324 to 329 (RAGNEK), and 421 to 423 (TAK). The Topo IB-type catalytic domain maps to 268–601 (CSKLKGETAW…LAMAGEDFEF (334 aa)). Y559 serves as the catalytic O-(3'-phospho-DNA)-tyrosine intermediate.

Belongs to the type IB topoisomerase family. Ca(2+) serves as cofactor. Mg(2+) is required as a cofactor.

The protein localises to the mitochondrion. It carries out the reaction ATP-independent breakage of single-stranded DNA, followed by passage and rejoining.. Its function is as follows. Releases the supercoiling and torsional tension of DNA introduced during duplication of mitochondrial DNA by transiently cleaving and rejoining one strand of the DNA duplex. Introduces a single-strand break via transesterification at a target site in duplex DNA. The scissile phosphodiester is attacked by the catalytic tyrosine of the enzyme, resulting in the formation of a DNA-(3'-phosphotyrosyl)-enzyme intermediate and the expulsion of a 5'-OH DNA strand. The free DNA strand then rotates around the intact phosphodiester bond on the opposing strand, thus removing DNA supercoils. Finally, in the religation step, the DNA 5'-OH attacks the covalent intermediate to expel the active-site tyrosine and restore the DNA phosphodiester backbone. The chain is DNA topoisomerase I, mitochondrial (TOP1MT) from Pan troglodytes (Chimpanzee).